Here is a 465-residue protein sequence, read N- to C-terminus: GTPase Der (465 aa).

2 consecutive EngA-type G domains span residues 3 to 167 and 179 to 352; these read PLVA…PEEG and IRIA…ESAN. GTP contacts are provided by residues 9–16, 57–61, 119–122, 185–192, 232–236, and 297–300; these read GRPNVGKS, DTGGI, NKID, DTAGL, and NKWD. Residues 353-437 enclose the KH-like domain; that stretch reads KTFTTSEVNK…PVSFIFREGT (85 aa).

The protein belongs to the TRAFAC class TrmE-Era-EngA-EngB-Septin-like GTPase superfamily. EngA (Der) GTPase family. In terms of assembly, associates with the 50S ribosomal subunit.

GTPase that plays an essential role in the late steps of ribosome biogenesis. In Stenotrophomonas maltophilia (strain K279a), this protein is GTPase Der.